Here is a 240-residue protein sequence, read N- to C-terminus: MGRRIQGQRRGRGTSTFRAPSHRYKAELSHKRTEDTDVLAGEVIDVEHDPARSAPVARVAFEDDDQRLVLASEGVGVGDTIEIGISATIEEGNTLPLAEIPEGVPVCNVESHPGDGGKFARAGGVNADLVTHERDATIVELPSGETKRLSPDCRATIGVVAGGGRTEKPFVKAGNKHHKMKARGTKWPRVRGVAMNAVDHPFGGGGRQHPGRPKSVSRDAAPGRKVGDIASKRTGRGGNE.

The disordered stretch occupies residues 199–240; sequence DHPFGGGGRQHPGRPKSVSRDAAPGRKVGDIASKRTGRGGNE. Basic and acidic residues predominate over residues 221-231; the sequence is APGRKVGDIAS.

This sequence belongs to the universal ribosomal protein uL2 family. In terms of assembly, part of the 50S ribosomal subunit. Forms a bridge to the 30S subunit in the 70S ribosome.

One of the primary rRNA binding proteins. Required for association of the 30S and 50S subunits to form the 70S ribosome, for tRNA binding and peptide bond formation. It has been suggested to have peptidyltransferase activity; this is somewhat controversial. Makes several contacts with the 16S rRNA in the 70S ribosome. The chain is Large ribosomal subunit protein uL2 from Halobacterium salinarum (strain ATCC 29341 / DSM 671 / R1).